The primary structure comprises 230 residues: tRNA (guanine-N(7)-)-methyltransferase (230 aa).

S-adenosyl-L-methionine-binding residues include Glu61, Glu86, Asp113, and Asp135. Asp135 is an active-site residue. Substrate is bound by residues Lys139, Asp171, and 209–212; that span reads TRYE.

It belongs to the class I-like SAM-binding methyltransferase superfamily. TrmB family.

The catalysed reaction is guanosine(46) in tRNA + S-adenosyl-L-methionine = N(7)-methylguanosine(46) in tRNA + S-adenosyl-L-homocysteine. It participates in tRNA modification; N(7)-methylguanine-tRNA biosynthesis. In terms of biological role, catalyzes the formation of N(7)-methylguanine at position 46 (m7G46) in tRNA. This is tRNA (guanine-N(7)-)-methyltransferase from Rhizobium etli (strain ATCC 51251 / DSM 11541 / JCM 21823 / NBRC 15573 / CFN 42).